The following is a 207-amino-acid chain: dTTP/UTP pyrophosphatase (207 aa).

Asp80 serves as the catalytic Proton acceptor.

This sequence belongs to the Maf family. YhdE subfamily. The cofactor is a divalent metal cation.

Its subcellular location is the cytoplasm. The catalysed reaction is dTTP + H2O = dTMP + diphosphate + H(+). It carries out the reaction UTP + H2O = UMP + diphosphate + H(+). In terms of biological role, nucleoside triphosphate pyrophosphatase that hydrolyzes dTTP and UTP. May have a dual role in cell division arrest and in preventing the incorporation of modified nucleotides into cellular nucleic acids. The protein is dTTP/UTP pyrophosphatase (maf1) of Agrobacterium fabrum (strain C58 / ATCC 33970) (Agrobacterium tumefaciens (strain C58)).